The primary structure comprises 151 residues: 3-hydroxyacyl-[acyl-carrier-protein] dehydratase FabZ (151 aa).

H54 is a catalytic residue.

This sequence belongs to the thioester dehydratase family. FabZ subfamily.

Its subcellular location is the cytoplasm. The enzyme catalyses a (3R)-hydroxyacyl-[ACP] = a (2E)-enoyl-[ACP] + H2O. In terms of biological role, involved in unsaturated fatty acids biosynthesis. Catalyzes the dehydration of short chain beta-hydroxyacyl-ACPs and long chain saturated and unsaturated beta-hydroxyacyl-ACPs. This Buchnera aphidicola subsp. Acyrthosiphon pisum (strain 5A) protein is 3-hydroxyacyl-[acyl-carrier-protein] dehydratase FabZ.